Reading from the N-terminus, the 426-residue chain is Enolase (426 aa).

Gln-163 lines the (2R)-2-phosphoglycerate pocket. Residue Glu-205 is the Proton donor of the active site. Mg(2+) contacts are provided by Asp-242, Glu-283, and Asp-310. The (2R)-2-phosphoglycerate site is built by Lys-335, Arg-364, Ser-365, and Lys-386. Lys-335 acts as the Proton acceptor in catalysis.

Belongs to the enolase family. Requires Mg(2+) as cofactor.

The protein localises to the cytoplasm. It localises to the secreted. Its subcellular location is the cell surface. The enzyme catalyses (2R)-2-phosphoglycerate = phosphoenolpyruvate + H2O. Its pathway is carbohydrate degradation; glycolysis; pyruvate from D-glyceraldehyde 3-phosphate: step 4/5. Catalyzes the reversible conversion of 2-phosphoglycerate (2-PG) into phosphoenolpyruvate (PEP). It is essential for the degradation of carbohydrates via glycolysis. The polypeptide is Enolase (Pseudarthrobacter chlorophenolicus (strain ATCC 700700 / DSM 12829 / CIP 107037 / JCM 12360 / KCTC 9906 / NCIMB 13794 / A6) (Arthrobacter chlorophenolicus)).